An 89-amino-acid polypeptide reads, in one-letter code: Small ribosomal subunit protein uS15 (89 aa).

The protein belongs to the universal ribosomal protein uS15 family. As to quaternary structure, part of the 30S ribosomal subunit. Forms a bridge to the 50S subunit in the 70S ribosome, contacting the 23S rRNA.

One of the primary rRNA binding proteins, it binds directly to 16S rRNA where it helps nucleate assembly of the platform of the 30S subunit by binding and bridging several RNA helices of the 16S rRNA. Functionally, forms an intersubunit bridge (bridge B4) with the 23S rRNA of the 50S subunit in the ribosome. This chain is Small ribosomal subunit protein uS15, found in Edwardsiella ictaluri (strain 93-146).